Consider the following 423-residue polypeptide: Glucoside xylosyltransferase 2 (423 aa).

The Cytoplasmic segment spans residues 1-6 (MRFRWK). A helical; Signal-anchor for type II membrane protein membrane pass occupies residues 7-26 (FFGSLLCVTGLLLVLYRQLG). Over 27–423 (NVPQPPPGPA…RVVVHIRSDV (397 aa)) the chain is Lumenal. The interval 60–85 (RRDARQGGKKKTNWNNVRAPEQKPNP) is disordered. Residues N215 and N256 are each glycosylated (N-linked (GlcNAc...) asparagine).

The protein belongs to the glycosyltransferase 8 family.

It localises to the membrane. The catalysed reaction is 3-O-(beta-D-glucosyl)-L-seryl-[EGF-like domain protein] + UDP-alpha-D-xylose = 3-O-[alpha-D-xylosyl-(1-&gt;3)-beta-D-glucosyl]-L-seryl-[EGF-like domain protein] + UDP + H(+). Its function is as follows. Glycosyltransferase which elongates the O-linked glucose attached to EGF-like repeats in the extracellular domain of Notch proteins by catalyzing the addition of xylose. The sequence is that of Glucoside xylosyltransferase 2 (gxylt2) from Xenopus laevis (African clawed frog).